A 422-amino-acid polypeptide reads, in one-letter code: Adenylosuccinate synthetase (422 aa).

Residues 11-17 and 39-41 each bind GTP; these read GDEGKGK and GHT. D12 (proton acceptor) is an active-site residue. Residues D12 and G39 each contribute to the Mg(2+) site. Residues 12–15, 37–40, T129, R143, N219, T234, and R298 each bind IMP; these read DEGK and NAGH. Catalysis depends on H40, which acts as the Proton donor. 294 to 300 provides a ligand contact to substrate; sequence VTTGRRR. GTP contacts are provided by residues R300, 326-328, and 409-411; these read KLD and GTG.

Belongs to the adenylosuccinate synthetase family. As to quaternary structure, homodimer. It depends on Mg(2+) as a cofactor.

It localises to the cytoplasm. The catalysed reaction is IMP + L-aspartate + GTP = N(6)-(1,2-dicarboxyethyl)-AMP + GDP + phosphate + 2 H(+). Its pathway is purine metabolism; AMP biosynthesis via de novo pathway; AMP from IMP: step 1/2. Plays an important role in the de novo pathway and in the salvage pathway of purine nucleotide biosynthesis. Catalyzes the first committed step in the biosynthesis of AMP from IMP. The sequence is that of Adenylosuccinate synthetase from Ajellomyces capsulatus (strain H143) (Darling's disease fungus).